The primary structure comprises 452 residues: UDP-N-acetylmuramate--L-alanine ligase (452 aa).

121–127 (GTHGKTT) contacts ATP.

The protein belongs to the MurCDEF family.

The protein resides in the cytoplasm. It catalyses the reaction UDP-N-acetyl-alpha-D-muramate + L-alanine + ATP = UDP-N-acetyl-alpha-D-muramoyl-L-alanine + ADP + phosphate + H(+). It functions in the pathway cell wall biogenesis; peptidoglycan biosynthesis. In terms of biological role, cell wall formation. This chain is UDP-N-acetylmuramate--L-alanine ligase, found in Christiangramia forsetii (strain DSM 17595 / CGMCC 1.15422 / KT0803) (Gramella forsetii).